The primary structure comprises 384 residues: Transcriptional regulator of the unfolded protein response hacA (384 aa).

Residues 1-18 (MTESTFAVETFSMDSMSP) show a composition bias toward polar residues. Disordered stretches follow at residues 1–27 (MTESTFAVETFSMDSMSPSPGAEIPRL) and 41–94 (LVPE…QRRI). A compositionally biased stretch (basic and acidic residues) spans 84 to 94 (KTEDEKEQRRI). The 64-residue stretch at 90 to 153 (EQRRIERVLR…NRLSQQVAKL (64 aa)) folds into the bZIP domain. The segment at 92–101 (RRIERVLRNR) is basic motif. The leucine-zipper stretch occupies residues 106–113 (ISRERKRL). 2 disordered regions span residues 208–256 (SIPF…PSDL) and 331–384 (PDED…AGAQ). Residues 218 to 240 (STTTTTTTTTTTSNNISSTSSTT) are compositionally biased toward low complexity.

This sequence belongs to the bZIP family.

The protein localises to the nucleus. In terms of biological role, master transcriptional regulator of the unfolded protein response (UPR) that recognizes and binds to the UPR element (UPRE) in the promoter of UPR-regulated genes. Exposure to antifungals and ER-stressing agents initiates the activation of hacA which occurs when a 20 nucleotide fragment is removed from part of the exon-2 and part of intron-2, which in turn promotes the arisen of the DNA binding site motif and a dimer interface domain. Modulates the expression of genes related to cell wall synthesis, ergosterol biosynthesis, pigmentation, heat shock proteins, and the genes coding for mannosyltransferase enzymes. Plays a key role in both response to stress and host-pathogen interaction. The polypeptide is Transcriptional regulator of the unfolded protein response hacA (Trichophyton rubrum (strain ATCC MYA-4607 / CBS 118892) (Athlete's foot fungus)).